A 725-amino-acid chain; its full sequence is Eukaryotic translation initiation factor 3 subunit B (725 aa).

One can recognise an RRM domain in the interval 46–130 (NCVFIAGIPV…HTFTARSFKD (85 aa)). 6 WD repeats span residues 202–240 (RANW…RAHR), 242–280 (AHTN…SLRI), 354–395 (VNIE…SMQR), 462–504 (PLSE…HAPK), 510–552 (DAGV…AKRT), and 554–594 (VIEH…FTFQ).

It belongs to the eIF-3 subunit B family. In terms of assembly, component of the eukaryotic translation initiation factor 3 (eIF-3) complex.

It localises to the cytoplasm. Its function is as follows. RNA-binding component of the eukaryotic translation initiation factor 3 (eIF-3) complex, which is involved in protein synthesis of a specialized repertoire of mRNAs and, together with other initiation factors, stimulates binding of mRNA and methionyl-tRNAi to the 40S ribosome. The eIF-3 complex specifically targets and initiates translation of a subset of mRNAs involved in cell proliferation. The sequence is that of Eukaryotic translation initiation factor 3 subunit B from Caenorhabditis elegans.